Reading from the N-terminus, the 113-residue chain is Iron-sulfur cluster insertion protein ErpA (113 aa).

Positions 41, 105, and 107 each coordinate iron-sulfur cluster.

The protein belongs to the HesB/IscA family. In terms of assembly, homodimer. It depends on iron-sulfur cluster as a cofactor.

Required for insertion of 4Fe-4S clusters for at least IspG. This is Iron-sulfur cluster insertion protein ErpA from Aliivibrio salmonicida (strain LFI1238) (Vibrio salmonicida (strain LFI1238)).